We begin with the raw amino-acid sequence, 388 residues long: Succinate--CoA ligase [ADP-forming] subunit beta (388 aa).

In terms of domain architecture, ATP-grasp spans 9-244 (KQLFARYGMP…PSQEDAREAH (236 aa)). ATP contacts are provided by residues Lys-46, 53-55 (GRG), Glu-99, Thr-102, and Glu-107. Mg(2+)-binding residues include Asn-199 and Asp-213. Residues Asn-264 and 321–323 (GIV) each bind substrate.

The protein belongs to the succinate/malate CoA ligase beta subunit family. Heterotetramer of two alpha and two beta subunits. Mg(2+) serves as cofactor.

The catalysed reaction is succinate + ATP + CoA = succinyl-CoA + ADP + phosphate. It catalyses the reaction GTP + succinate + CoA = succinyl-CoA + GDP + phosphate. Its pathway is carbohydrate metabolism; tricarboxylic acid cycle; succinate from succinyl-CoA (ligase route): step 1/1. Functionally, succinyl-CoA synthetase functions in the citric acid cycle (TCA), coupling the hydrolysis of succinyl-CoA to the synthesis of either ATP or GTP and thus represents the only step of substrate-level phosphorylation in the TCA. The beta subunit provides nucleotide specificity of the enzyme and binds the substrate succinate, while the binding sites for coenzyme A and phosphate are found in the alpha subunit. The sequence is that of Succinate--CoA ligase [ADP-forming] subunit beta from Yersinia pseudotuberculosis serotype O:1b (strain IP 31758).